The chain runs to 464 residues: Trigger factor (464 aa).

The region spanning 162-243 is the PPIase FKBP-type domain; it reads GDFVSIDLSA…VKSVKERELP (82 aa). Residues 431–464 form a disordered region; the sequence is IDTSEFFGKRPSGDGAADEDADQADESTTADAGE. Residues 446–455 are compositionally biased toward acidic residues; that stretch reads AADEDADQAD.

Belongs to the FKBP-type PPIase family. Tig subfamily.

It is found in the cytoplasm. The enzyme catalyses [protein]-peptidylproline (omega=180) = [protein]-peptidylproline (omega=0). Functionally, involved in protein export. Acts as a chaperone by maintaining the newly synthesized protein in an open conformation. Functions as a peptidyl-prolyl cis-trans isomerase. This is Trigger factor from Mycobacterium avium (strain 104).